The following is a 344-amino-acid chain: Tripartite motif-containing protein 44 (344 aa).

Disordered regions lie at residues 1 to 25 (MASGVGAAFEELPHDGTCDECEPDE) and 68 to 165 (TPPA…EFDP). The segment covering 75–92 (GAGKEEAEVKVEQEREIE) has biased composition (basic and acidic residues). Residues 93–165 (SEAGEESESE…ETEAESEFDP (73 aa)) show a composition bias toward acidic residues. The B box-type zinc-finger motif lies at 174–215 (VAKRKCPDHGLDLSTYCQEDRQLICVLCPVIGAHQGHQLSTL). 4 residues coordinate Zn(2+): cysteine 179, histidine 182, cysteine 201, and histidine 207. The stretch at 290–325 (AHVTEILADIQSHMDRLMTQMAQAKEQLDTSNESAE) forms a coiled coil. Residues 309–344 (QMAQAKEQLDTSNESAEPKAEGDEEGPSGASEEEDT) are disordered. A compositionally biased stretch (acidic residues) spans 330–344 (GDEEGPSGASEEEDT). Serine 336 and serine 339 each carry phosphoserine.

Interacts (via coiled coil) with TRIM17 (via coiled coil).

In terms of biological role, may play a role in the process of differentiation and maturation of neuronal cells. May regulate the activity of TRIM17. Is a negative regulator of PAX6 expression. The sequence is that of Tripartite motif-containing protein 44 (TRIM44) from Pongo abelii (Sumatran orangutan).